The primary structure comprises 72 residues: Large ribosomal subunit protein bL32 (72 aa).

Belongs to the bacterial ribosomal protein bL32 family.

This chain is Large ribosomal subunit protein bL32, found in Dehalococcoides mccartyi (strain ATCC BAA-2100 / JCM 16839 / KCTC 5957 / BAV1).